We begin with the raw amino-acid sequence, 331 residues long: Sideroflexin-5 (331 aa).

Transmembrane regions (helical) follow at residues 104 to 126, 153 to 175, 243 to 265, and 278 to 300; these read PFGWITVTGMLLPNPSWPTLLFW, YIGAYGAAVTAACSISGGLTYFI, TTMVRAFLPVPLLLMPPCIMPYL, and HIFVNAIVCTLSFAVSLPVALAL.

It belongs to the sideroflexin family.

It localises to the mitochondrion inner membrane. It catalyses the reaction citrate(in) = citrate(out). Functionally, mitochondrial amino-acid transporter. The polypeptide is Sideroflexin-5 (Caenorhabditis elegans).